A 283-amino-acid polypeptide reads, in one-letter code: 3-methyl-2-oxobutanoate hydroxymethyltransferase (283 aa).

D44 and D83 together coordinate Mg(2+). 3-methyl-2-oxobutanoate-binding positions include 44-45, D83, and K112; that span reads DS. A Mg(2+)-binding site is contributed by E114. The active-site Proton acceptor is E181.

This sequence belongs to the PanB family. Homodecamer; pentamer of dimers. The cofactor is Mg(2+).

It is found in the cytoplasm. It carries out the reaction 3-methyl-2-oxobutanoate + (6R)-5,10-methylene-5,6,7,8-tetrahydrofolate + H2O = 2-dehydropantoate + (6S)-5,6,7,8-tetrahydrofolate. The protein operates within cofactor biosynthesis; coenzyme A biosynthesis. Catalyzes the reversible reaction in which hydroxymethyl group from 5,10-methylenetetrahydrofolate is transferred onto alpha-ketoisovalerate to form ketopantoate. The chain is 3-methyl-2-oxobutanoate hydroxymethyltransferase from Pyrococcus furiosus (strain ATCC 43587 / DSM 3638 / JCM 8422 / Vc1).